Consider the following 190-residue polypeptide: Segregation and condensation protein B (190 aa).

The protein belongs to the ScpB family. Homodimer. Homodimerization may be required to stabilize the binding of ScpA to the Smc head domains. Component of a cohesin-like complex composed of ScpA, ScpB and the Smc homodimer, in which ScpA and ScpB bind to the head domain of Smc. The presence of the three proteins is required for the association of the complex with DNA.

Its subcellular location is the cytoplasm. Participates in chromosomal partition during cell division. May act via the formation of a condensin-like complex containing Smc and ScpA that pull DNA away from mid-cell into both cell halves. The chain is Segregation and condensation protein B from Bacillus cereus (strain G9842).